Consider the following 445-residue polypeptide: MHPHDQTIFALSSGRPPSAIAIVRLSGVGAGPALQTLTGKLPPPRLATRALLRDDRGDPIDDAVVLWFPGPASATGEDVAELHVHGSRAVITTLVSLLSAMPQMRAADRGEFTRRAFENGKIDLTEAEGLDDLIHADTDRQRRQALRQLKGLLGDKARSWRDQIIQAAALIEAGIDFADEGDVPAELIAPALAWIRQLLAEIEEVLAAQGRAERLRDGLTVVIAGPPNAGKSTLMNQLARREVAIVSPHAGTTRDLIEVALDLDGYPVTVIDTAGIRQTDDPVEQEGVRRARDRAAQADLVLWLTEDDQAELERQTDGPIWFVRNKIDLMITEQSGAISVSPESPVFAISARSGAGMSDLLEALVGFARDYFGATEHGLITRERQRTWLSETAAALRRSIAAVDLGEELAAEELRIAALALGRLLGRVDVEDLLDVIFREFCIGK.

(6S)-5-formyl-5,6,7,8-tetrahydrofolate is bound by residues Arg24, Glu81, and Lys121. The 152-residue stretch at 218–369 (GLTVVIAGPP…LLEALVGFAR (152 aa)) folds into the TrmE-type G domain. GTP contacts are provided by residues 228–233 (NAGKST), 247–253 (SPHAGTT), 272–275 (DTAG), and 350–352 (SAR). 2 residues coordinate Mg(2+): Ser232 and Thr253. Residue Lys445 participates in (6S)-5-formyl-5,6,7,8-tetrahydrofolate binding.

This sequence belongs to the TRAFAC class TrmE-Era-EngA-EngB-Septin-like GTPase superfamily. TrmE GTPase family. Homodimer. Heterotetramer of two MnmE and two MnmG subunits. K(+) is required as a cofactor.

It localises to the cytoplasm. Exhibits a very high intrinsic GTPase hydrolysis rate. Involved in the addition of a carboxymethylaminomethyl (cmnm) group at the wobble position (U34) of certain tRNAs, forming tRNA-cmnm(5)s(2)U34. This Bradyrhizobium sp. (strain BTAi1 / ATCC BAA-1182) protein is tRNA modification GTPase MnmE.